Reading from the N-terminus, the 167-residue chain is MRSRSFLVLVVVFLICGTLVAQAAGRIRRPKGKGTKKILALVKGQGPVRGKDQVKGQGPVKGQDLGKSQDPVKAQLPDKGQDLGKGEDSVKGQDPFKAQLPDKLQDPVKAQPAIKRLILLTKPGSCPRILIRCLMVNPPNRCLSDAQCPGLKKCCEGFCGKACMDPK.

The first 21 residues, 1–21 (MRSRSFLVLVVVFLICGTLVA), serve as a signal peptide directing secretion. Residues 22 to 70 (QAAGRIRRPKGKGTKKILALVKGQGPVRGKDQVKGQGPVKGQDLGKSQD) constitute a propeptide that is removed on maturation. Tandem repeats lie at residues 44–49 (GQGPVR), 50–55 (GKDQVK), 56–61 (GQGPVK), 62–67 (GQDLGK), 68–73 (SQDPVK), 74–79 (AQLPDK), 80–85 (GQDLGK), 86–91 (GEDSVK), 92–97 (GQDPFK), 98–103 (AQLPDK), 104–109 (LQDPVK), and 110–115 (AQPAIK). Residues 44 to 115 (GQGPVRGKDQ…DPVKAQPAIK (72 aa)) are 12 X 6 AA tandem repeats of [GSAL]-[QEK]-[DGLP]-[APSLQ]-[VGDFI]-[KR]. The interval 46-104 (GPVRGKDQVKGQGPVKGQDLGKSQDPVKAQLPDKGQDLGKGEDSVKGQDPFKAQLPDKL) is disordered. The interval 78 to 126 (DKGQDLGKGEDSVKGQDPFKAQLPDKLQDPVKAQPAIKRLILLTKPGSC) is 2 X tandem repeats of SVP-1 like motif. A compositionally biased stretch (basic and acidic residues) spans 79–91 (KGQDLGKGEDSVK). 2 SVP-1 clotting repeats span residues 80 to 101 (GQDL…AQLP) and 104 to 126 (LQDP…PGSC). A WAP domain is found at 119-167 (LLTKPGSCPRILIRCLMVNPPNRCLSDAQCPGLKKCCEGFCGKACMDPK). Disulfide bonds link cysteine 126-cysteine 155, cysteine 133-cysteine 159, cysteine 142-cysteine 154, and cysteine 148-cysteine 163.

In terms of tissue distribution, trachea and large intestine.

Its function is as follows. Neutrophil and pancreatic elastase-specific inhibitor of skin. It may prevent elastase-mediated tissue proteolysis. This chain is Elafin, found in Sus scrofa (Pig).